Here is an 80-residue protein sequence, read N- to C-terminus: Keratin-associated protein 6-1 (80 aa).

It belongs to the KRTAP type 6 family. As to quaternary structure, interacts with hair keratins.

In the hair cortex, hair keratin intermediate filaments are embedded in an interfilamentous matrix, consisting of hair keratin-associated proteins (KRTAP), which are essential for the formation of a rigid and resistant hair shaft through their extensive disulfide bond cross-linking with abundant cysteine residues of hair keratins. The matrix proteins include the high-sulfur and high-glycine-tyrosine keratins. The polypeptide is Keratin-associated protein 6-1 (KRTAP6-1) (Oryctolagus cuniculus (Rabbit)).